A 387-amino-acid polypeptide reads, in one-letter code: Pyrophosphate--fructose 6-phosphate 1-phosphotransferase 3 (387 aa).

Residue G15 participates in diphosphate binding. Residue D114 coordinates Mg(2+). Substrate-binding positions include 140–142 (TID), 186–188 (MGR), E247, and 308–311 (YELR). The Proton acceptor role is filled by D142.

Belongs to the phosphofructokinase type A (PFKA) family. PPi-dependent PFK group II subfamily. Clade 'Short' sub-subfamily. As to quaternary structure, homotetramer. The cofactor is Mg(2+).

It is found in the cytoplasm. It carries out the reaction beta-D-fructose 6-phosphate + diphosphate = beta-D-fructose 1,6-bisphosphate + phosphate + H(+). The protein operates within carbohydrate degradation; glycolysis; D-glyceraldehyde 3-phosphate and glycerone phosphate from D-glucose: step 3/4. Its activity is regulated as follows. Non-allosteric. Functionally, catalyzes the phosphorylation of D-fructose 6-phosphate, the first committing step of glycolysis. Uses inorganic phosphate (PPi) as phosphoryl donor instead of ATP like common ATP-dependent phosphofructokinases (ATP-PFKs), which renders the reaction reversible, and can thus function both in glycolysis and gluconeogenesis. Consistently, PPi-PFK can replace the enzymes of both the forward (ATP-PFK) and reverse (fructose-bisphosphatase (FBPase)) reactions. This is Pyrophosphate--fructose 6-phosphate 1-phosphotransferase 3 (pfk3) from Trichomonas vaginalis (strain ATCC PRA-98 / G3).